The chain runs to 587 residues: Lipoprotein LpqB (587 aa).

The signal sequence occupies residues 1–19 (MERLMRLTILLFLGAVLAG). Residue C20 is the site of N-palmitoyl cysteine attachment. The S-diacylglycerol cysteine moiety is linked to residue C20.

It belongs to the LpqB lipoprotein family.

The protein localises to the cell membrane. In Mycobacterium bovis (strain ATCC BAA-935 / AF2122/97), this protein is Lipoprotein LpqB.